Here is a 160-residue protein sequence, read N- to C-terminus: UPF0225 protein CGSHiEE_01665 (160 aa).

The protein belongs to the UPF0225 family.

In Haemophilus influenzae (strain PittEE), this protein is UPF0225 protein CGSHiEE_01665.